Consider the following 174-residue polypeptide: MSLNLDEKKAVVAEVSAQVAKAQAIIIAEYRGLGVGHMTQLRAKARQSGIYFRVLKNSLARRAVSDTPFSGLSEHMVGPLAYGIGSDPVAAAKVLHEFSKGNDKLVIKAGAMANHVISSSEIASLASLPSREELLAKLLGTMQAPVANFVRTLNEVPARFVRGLAAVRDQKESA.

It belongs to the universal ribosomal protein uL10 family. Part of the ribosomal stalk of the 50S ribosomal subunit. The N-terminus interacts with L11 and the large rRNA to form the base of the stalk. The C-terminus forms an elongated spine to which L12 dimers bind in a sequential fashion forming a multimeric L10(L12)X complex.

Forms part of the ribosomal stalk, playing a central role in the interaction of the ribosome with GTP-bound translation factors. The chain is Large ribosomal subunit protein uL10 from Nitrosospira multiformis (strain ATCC 25196 / NCIMB 11849 / C 71).